We begin with the raw amino-acid sequence, 577 residues long: Cleavage stimulation factor subunit 2 (577 aa).

The residue at position 14 (Ser-14) is a Phosphoserine. Residues 16–94 (RSVFVGNIPY…RALRVDNAAS (79 aa)) form the RRM domain. The interval 108–248 (APVIESPYGE…VNGAPPLMQA (141 aa)) is interactions with CSTF3 and SYMPK. Lys-189 is covalently cross-linked (Glycyl lysine isopeptide (Lys-Gly) (interchain with G-Cter in SUMO2)). Positions 206–243 (QPVHGAGPGSGSNVSMNQQNPQAPQAQSLGGMHVNGAP) are disordered. Positions 222–232 (NQQNPQAPQAQ) are enriched in low complexity. The residue at position 308 (Arg-308) is an Omega-N-methylarginine. Positions 340 to 409 (EVEPRGYLGP…DGRGGRDPRG (70 aa)) are disordered. Over residues 360–373 (PGHESRGPPPHELR) the composition is skewed to basic and acidic residues. The stretch at 410–414 (IDARG) is one 1; approximate repeat. The segment at 410–469 (IDARGMEARAMEARGLDARGLEARAMEARAMEARAMEARAMEARAMEVRGMEARGMDTRG) is 12 X 5 AA tandem repeats of M-E-A-R-[AG]. 2 repeat units span residues 415–419 (MEARA) and 420–424 (MEARG). One copy of the 4; approximate repeat lies at 425–429 (LDARG). The 5; approximate repeat unit spans residues 430-434 (LEARA). 4 repeat units span residues 435-439 (MEARA), 440-444 (MEARA), 445-449 (MEARA), and 450-454 (MEARA). The 10; approximate repeat unit spans residues 455 to 459 (MEVRG). Residues 460–464 (MEARG) form repeat 11. Residues 465–469 (MDTRG) form a 12; approximate repeat. Residues Arg-468 and Arg-475 each carry the omega-N-methylarginine modification. A disordered region spans residues 508–532 (GMQGASIQGGSQPGGFSPGQNQVTP). The segment at 514–577 (IQGGSQPGGF…EQIQKSTGAP (64 aa)) is interaction with RPO2TC1. Phosphoserine is present on residues Ser-518 and Ser-524.

As to quaternary structure, the CSTF complex is composed of CSTF1 (50 kDa subunit), CSTF2 (64 kDa subunit) and CSTF3 (77 kDa subunit). CSTF2 directly interacts with CSTF3, SYMPK and RPO2TC1. Interacts with HSF1 in heat-stressed cells. Interacts with CPSF2, CPSF3 and FIP1L1. Interacts with DDX1.

The protein localises to the nucleus. One of the multiple factors required for polyadenylation and 3'-end cleavage of mammalian pre-mRNAs. This subunit is directly involved in the binding to pre-mRNAs. The sequence is that of Cleavage stimulation factor subunit 2 (CSTF2) from Homo sapiens (Human).